We begin with the raw amino-acid sequence, 494 residues long: Ectonucleoside triphosphate diphosphohydrolase 8 (494 aa).

At 1–8 (MRLSWKER) the chain is on the cytoplasmic side. The helical transmembrane segment at 9–29 (VFMVLLGVAAASGLTMLILIL) threads the bilayer. The Extracellular portion of the chain corresponds to 30 to 465 (VKATNVLLPA…LTQWRAQSYS (436 aa)). An intrachain disulfide couples C78 to C102. The active-site Proton acceptor is the E168. A disulfide bridge connects residues C245 and C291. 2 N-linked (GlcNAc...) asparagine glycosylation sites follow: N299 and N303. The cysteines at positions 328 and 334 are disulfide-linked. N362 is a glycosylation site (N-linked (GlcNAc...) asparagine). Residues C380 and C402 are joined by a disulfide bond. The chain crosses the membrane as a helical span at residues 466–486 (IWIAGVVFAVLTLVAILGAAA). Topologically, residues 487–494 (VQLFWTQD) are cytoplasmic.

This sequence belongs to the GDA1/CD39 NTPase family. Requires Ca(2+) as cofactor. Mg(2+) is required as a cofactor. Post-translationally, N-glycosylated. In terms of tissue distribution, present in liver, and at lower level in jejunum and kidney. Limited to the canalicular domain of hepatocytes (at protein level).

Its subcellular location is the cell membrane. The enzyme catalyses a ribonucleoside 5'-triphosphate + 2 H2O = a ribonucleoside 5'-phosphate + 2 phosphate + 2 H(+). In terms of biological role, canalicular ectonucleoside NTPDase responsible for the main hepatic NTPDase activity. Ectonucleoside NTPDases catalyze the hydrolysis of gamma- and beta-phosphate residues of nucleotides, playing a central role in concentration of extracellular nucleotides. Has activity toward ATP, ADP, UTP and UDP, but not toward AMP. This chain is Ectonucleoside triphosphate diphosphohydrolase 8 (Entpd8), found in Rattus norvegicus (Rat).